The chain runs to 384 residues: Probable endopolygalacturonase C (384 aa).

The first 19 residues, 1–19 (MVRQLILISSLLAAVAVRA), serve as a signal peptide directing secretion. A propeptide spanning residues 20–40 (APADPAHPMVTEAPDVNLVEK) is cleaved from the precursor. The cysteines at positions 45 and 63 are disulfide-linked. PbH1 repeat units follow at residues 176–207 (STDL…DIGE) and 208–229 (STYI…AINS). Aspartate 222 acts as the Proton donor in catalysis. Cysteine 224 and cysteine 240 form a disulfide bridge. Residue histidine 244 is part of the active site. PbH1 repeat units follow at residues 254-280 (RDDN…RIKT) and 288-310 (VSEV…VIEQ). The N-linked (GlcNAc...) asparagine glycan is linked to asparagine 261. Cystine bridges form between cysteine 349–cysteine 354 and cysteine 373–cysteine 382.

The protein belongs to the glycosyl hydrolase 28 family.

The protein resides in the secreted. It catalyses the reaction (1,4-alpha-D-galacturonosyl)n+m + H2O = (1,4-alpha-D-galacturonosyl)n + (1,4-alpha-D-galacturonosyl)m.. Involved in maceration and soft-rotting of plant tissue. Hydrolyzes the 1,4-alpha glycosidic bonds of de-esterified pectate in the smooth region of the plant cell wall. This chain is Probable endopolygalacturonase C (pgaC), found in Aspergillus niger (strain ATCC MYA-4892 / CBS 513.88 / FGSC A1513).